The sequence spans 246 residues: DNA polymerase sliding clamp (246 aa).

The protein belongs to the PCNA family. Homotrimer. The subunits circularize to form a toroid; DNA passes through its center. Replication factor C (RFC) is required to load the toroid on the DNA.

Its function is as follows. Sliding clamp subunit that acts as a moving platform for DNA processing. Responsible for tethering the catalytic subunit of DNA polymerase and other proteins to DNA during high-speed replication. The sequence is that of DNA polymerase sliding clamp from Thermoplasma volcanium (strain ATCC 51530 / DSM 4299 / JCM 9571 / NBRC 15438 / GSS1).